We begin with the raw amino-acid sequence, 460 residues long: Arginine decarboxylase (460 aa).

Lys-226 is subject to N6-(pyridoxal phosphate)lysine.

The protein belongs to the Orn/Lys/Arg decarboxylase class-I family. Pyridoxal 5'-phosphate serves as cofactor.

The protein localises to the cytoplasm. The enzyme catalyses L-arginine + H(+) = agmatine + CO2. Its pathway is amine and polyamine biosynthesis; agmatine biosynthesis; agmatine from L-arginine: step 1/1. Catalyzes the formation of agmatine from arginine. The polypeptide is Arginine decarboxylase (speA) (Bacillus cereus (strain ATCC 14579 / DSM 31 / CCUG 7414 / JCM 2152 / NBRC 15305 / NCIMB 9373 / NCTC 2599 / NRRL B-3711)).